A 491-amino-acid chain; its full sequence is Probable glycine dehydrogenase (decarboxylating) subunit 2 (491 aa).

Lys-273 carries the N6-(pyridoxal phosphate)lysine modification.

It belongs to the GcvP family. C-terminal subunit subfamily. In terms of assembly, the glycine cleavage system is composed of four proteins: P, T, L and H. In this organism, the P 'protein' is a heterodimer of two subunits. Requires pyridoxal 5'-phosphate as cofactor.

It catalyses the reaction N(6)-[(R)-lipoyl]-L-lysyl-[glycine-cleavage complex H protein] + glycine + H(+) = N(6)-[(R)-S(8)-aminomethyldihydrolipoyl]-L-lysyl-[glycine-cleavage complex H protein] + CO2. The glycine cleavage system catalyzes the degradation of glycine. The P protein binds the alpha-amino group of glycine through its pyridoxal phosphate cofactor; CO(2) is released and the remaining methylamine moiety is then transferred to the lipoamide cofactor of the H protein. This Bacillus cereus (strain ATCC 10987 / NRS 248) protein is Probable glycine dehydrogenase (decarboxylating) subunit 2.